Here is a 369-residue protein sequence, read N- to C-terminus: Cytoplasmic tRNA 2-thiolation protein 1 (369 aa).

The protein belongs to the TtcA family. CTU1/NCS6/ATPBD3 subfamily.

The protein localises to the cytoplasm. Its pathway is tRNA modification; 5-methoxycarbonylmethyl-2-thiouridine-tRNA biosynthesis. Its function is as follows. Plays a central role in 2-thiolation of mcm(5)S(2)U at tRNA wobble positions of tRNA(Lys), tRNA(Glu) and tRNA(Gln). Directly binds tRNAs and probably acts by catalyzing adenylation of tRNAs, an intermediate required for 2-thiolation. It is unclear whether it acts as a sulfurtransferase that transfers sulfur from thiocarboxylated URM1 onto the uridine of tRNAs at wobble position. Prior mcm(5) tRNA modification by the elongator complex is required for 2-thiolation. May also be involved in protein urmylation. The polypeptide is Cytoplasmic tRNA 2-thiolation protein 1 (Cryptococcus neoformans var. neoformans serotype D (strain JEC21 / ATCC MYA-565) (Filobasidiella neoformans)).